The chain runs to 395 residues: Alanine racemase 2 (395 aa).

The active-site Proton acceptor; specific for D-alanine is Lys60. Position 60 is an N6-(pyridoxal phosphate)lysine (Lys60). Position 158 (Arg158) interacts with substrate. The active-site Proton acceptor; specific for L-alanine is Tyr288. Met332 provides a ligand contact to substrate.

It belongs to the alanine racemase family. Pyridoxal 5'-phosphate is required as a cofactor.

The enzyme catalyses L-alanine = D-alanine. The protein operates within amino-acid biosynthesis; D-alanine biosynthesis; D-alanine from L-alanine: step 1/1. Catalyzes the interconversion of L-alanine and D-alanine. May also act on other amino acids. The sequence is that of Alanine racemase 2 (alr2) from Clostridium acetobutylicum (strain ATCC 824 / DSM 792 / JCM 1419 / IAM 19013 / LMG 5710 / NBRC 13948 / NRRL B-527 / VKM B-1787 / 2291 / W).